A 660-amino-acid chain; its full sequence is Chaperone protein DnaK (660 aa).

At Thr201 the chain carries Phosphothreonine; by autocatalysis. The tract at residues 599–660 is disordered; sequence EAMQAQSASA…ADVEIVDKPE (62 aa). Residues 600-617 show a composition bias toward low complexity; the sequence is AMQAQSASAAASSAANAQ.

It belongs to the heat shock protein 70 family.

In terms of biological role, acts as a chaperone. This chain is Chaperone protein DnaK, found in Chlamydia trachomatis serovar A (strain ATCC VR-571B / DSM 19440 / HAR-13).